The chain runs to 181 residues: Ribosome maturation factor RimM (181 aa).

Residues 100-177 (EEGFYWMQLI…QIQVDWQLED (78 aa)) enclose the PRC barrel domain.

Belongs to the RimM family. As to quaternary structure, binds ribosomal protein uS19.

The protein localises to the cytoplasm. An accessory protein needed during the final step in the assembly of 30S ribosomal subunit, possibly for assembly of the head region. Essential for efficient processing of 16S rRNA. May be needed both before and after RbfA during the maturation of 16S rRNA. It has affinity for free ribosomal 30S subunits but not for 70S ribosomes. In Hydrogenovibrio crunogenus (strain DSM 25203 / XCL-2) (Thiomicrospira crunogena), this protein is Ribosome maturation factor RimM.